Consider the following 286-residue polypeptide: Shikimate dehydrogenase (NADP(+)) (286 aa).

Shikimate contacts are provided by residues 21–23 (TLS) and Thr68. Lys72 functions as the Proton acceptor in the catalytic mechanism. Glu84 provides a ligand contact to NADP(+). Positions 93 and 108 each coordinate shikimate. Residues 132 to 136 (GNGGA) and Leu230 contribute to the NADP(+) site. Tyr232 is a shikimate binding site. Gly253 provides a ligand contact to NADP(+).

The protein belongs to the shikimate dehydrogenase family. In terms of assembly, homodimer.

It catalyses the reaction shikimate + NADP(+) = 3-dehydroshikimate + NADPH + H(+). The protein operates within metabolic intermediate biosynthesis; chorismate biosynthesis; chorismate from D-erythrose 4-phosphate and phosphoenolpyruvate: step 4/7. Its function is as follows. Involved in the biosynthesis of the chorismate, which leads to the biosynthesis of aromatic amino acids. Catalyzes the reversible NADPH linked reduction of 3-dehydroshikimate (DHSA) to yield shikimate (SA). This Microcystis aeruginosa (strain NIES-843 / IAM M-2473) protein is Shikimate dehydrogenase (NADP(+)).